Reading from the N-terminus, the 190-residue chain is Xanthine phosphoribosyltransferase (190 aa).

The xanthine site is built by Leu-20 and Asn-27. 128 to 132 (ANGKA) provides a ligand contact to 5-phospho-alpha-D-ribose 1-diphosphate. Lys-156 provides a ligand contact to xanthine.

Belongs to the purine/pyrimidine phosphoribosyltransferase family. Xpt subfamily. In terms of assembly, homodimer.

It localises to the cytoplasm. The enzyme catalyses XMP + diphosphate = xanthine + 5-phospho-alpha-D-ribose 1-diphosphate. It participates in purine metabolism; XMP biosynthesis via salvage pathway; XMP from xanthine: step 1/1. In terms of biological role, converts the preformed base xanthine, a product of nucleic acid breakdown, to xanthosine 5'-monophosphate (XMP), so it can be reused for RNA or DNA synthesis. The chain is Xanthine phosphoribosyltransferase from Pseudomonas entomophila (strain L48).